The following is a 323-amino-acid chain: CD-NTase-associated protein 12 (323 aa).

The 117-residue stretch at 4–120 (RIFIGSSSEQ…LDGITVAKFT (117 aa)) folds into the TIR domain. The active site involves Glu84. Residues 154 to 323 (STALAIGYYN…YVNVLTNVKL (170 aa)) form an STING domain region. Positions 164, 165, 234, 237, 259, 262, and 263 each coordinate 3',3'-c-di-GMP.

It in the C-terminal section; belongs to the bacterial STING family. In terms of assembly, forms homodimers which subsequently form filaments. In vitro in the presence of c-di-GMP forms filaments up to 300 nm in length with an ordered array of parallel-stacked subunits, where the TIR domains form one face of the filament and the STING domains form the other face. Antiparallel double-filament structures are also seen. 3'3'-cGAMP weakly induces filament formation, while 2'3'-cGAMP does not.

The enzyme catalyses NAD(+) + H2O = ADP-D-ribose + nicotinamide + H(+). Its activity is regulated as follows. NAD(+) hydrolase activity is strongly stimulated by c-di-GMP, weakly by 3'3'-cGAMP, very weakly by c-di-AMP and not at all by 2'3'-cGAMP. Self-association of TIR domains is required for NADase activity. Functionally, effector protein of a CBASS antiviral system with NAD(+) hydrolase activity. CBASS (cyclic oligonucleotide-based antiphage signaling system) provides immunity against bacteriophage. The CD-NTase protein synthesizes cyclic nucleotides in response to infection; these serve as specific second messenger signals. The signals activate a diverse range of effectors, leading to bacterial cell death and thus abortive phage infection. A type I-D(GG) CBASS system. In terms of biological role, upon activation by 3'3'-c-di-GMP forms filaments which hydrolyze NAD(+); filament formation is required for enzyme activation. Induction in an E.coli strain that synthesizes c-di-GMP leads to significant growth inhibition. Binds c-di-GMP and 3'3'-cGAMP (3'3'-cyclic GMP-AMP), but not c-di-AMP, 2'3'-cGAMP or cUMP-AMP. This Sphingobacterium faecium (strain DSM 11690 / JCM 21820 / NBRC 15299 / NCIMB 13408 / KS 0470) protein is CD-NTase-associated protein 12.